The following is a 165-amino-acid chain: Chorismate pyruvate-lyase (165 aa).

Residues methionine 35, arginine 77, leucine 115, and glutamate 156 each contribute to the substrate site.

It belongs to the UbiC family. As to quaternary structure, monomer.

The protein resides in the cytoplasm. The enzyme catalyses chorismate = 4-hydroxybenzoate + pyruvate. It participates in cofactor biosynthesis; ubiquinone biosynthesis. In terms of biological role, removes the pyruvyl group from chorismate, with concomitant aromatization of the ring, to provide 4-hydroxybenzoate (4HB) for the ubiquinone pathway. This chain is Chorismate pyruvate-lyase, found in Escherichia coli O157:H7.